A 196-amino-acid polypeptide reads, in one-letter code: Penicillin-binding protein activator LpoB (196 aa).

Residues 1 to 16 (MKKYLGIVLMALVIAG) form the signal peptide. A lipid anchor (N-palmitoyl cysteine) is attached at Cys17. The S-diacylglycerol cysteine moiety is linked to residue Cys17. Residues 24-54 (TEQPATIEPAVPTPSKPQLPPSESQPLPTPP) form a disordered region. Residues 34–43 (VPTPSKPQLP) show a composition bias toward pro residues.

This sequence belongs to the LpoB family. As to quaternary structure, interacts with PBP1b.

Its subcellular location is the cell outer membrane. Functionally, regulator of peptidoglycan synthesis that is essential for the function of penicillin-binding protein 1B (PBP1b). This Dickeya dadantii (strain 3937) (Erwinia chrysanthemi (strain 3937)) protein is Penicillin-binding protein activator LpoB.